Consider the following 461-residue polypeptide: Kynurenine 3-monooxygenase (461 aa).

Residues 17–18 (LA), 37–39 (ERR), and alanine 56 each bind FAD. L-kynurenine-binding residues include arginine 84 and tyrosine 98. Residues arginine 111, leucine 135, aspartate 311, and 324–325 (MN) each bind FAD. Positions 369 and 404 each coordinate L-kynurenine.

This sequence belongs to the aromatic-ring hydroxylase family. KMO subfamily. It depends on FAD as a cofactor.

The catalysed reaction is L-kynurenine + NADPH + O2 + H(+) = 3-hydroxy-L-kynurenine + NADP(+) + H2O. Its pathway is cofactor biosynthesis; NAD(+) biosynthesis; quinolinate from L-kynurenine: step 1/3. It functions in the pathway siderophore biosynthesis; quinolobactin biosynthesis. Functionally, catalyzes the hydroxylation of L-kynurenine (L-Kyn) to form 3-hydroxy-L-kynurenine (L-3OHKyn). Probably required for the synthesis of quinolinic acid and the siderophore quinolobactin. The chain is Kynurenine 3-monooxygenase from Pseudomonas fluorescens.